The chain runs to 1384 residues: DNA-directed RNA polymerase subunit beta (1384 aa).

This sequence belongs to the RNA polymerase beta chain family. The RNAP catalytic core consists of 2 alpha, 1 beta, 1 beta' and 1 omega subunit. When a sigma factor is associated with the core the holoenzyme is formed, which can initiate transcription.

It catalyses the reaction RNA(n) + a ribonucleoside 5'-triphosphate = RNA(n+1) + diphosphate. Its function is as follows. DNA-dependent RNA polymerase catalyzes the transcription of DNA into RNA using the four ribonucleoside triphosphates as substrates. The polypeptide is DNA-directed RNA polymerase subunit beta (Xylella fastidiosa (strain M12)).